A 224-amino-acid chain; its full sequence is Phosphoribosylformylglycinamidine synthase subunit PurQ (224 aa).

One can recognise a Glutamine amidotransferase type-1 domain in the interval Met-1–Ala-224. Cys-84 serves as the catalytic Nucleophile. Residues His-196 and Glu-198 contribute to the active site.

As to quaternary structure, part of the FGAM synthase complex composed of 1 PurL, 1 PurQ and 2 PurS subunits.

Its subcellular location is the cytoplasm. The catalysed reaction is N(2)-formyl-N(1)-(5-phospho-beta-D-ribosyl)glycinamide + L-glutamine + ATP + H2O = 2-formamido-N(1)-(5-O-phospho-beta-D-ribosyl)acetamidine + L-glutamate + ADP + phosphate + H(+). The enzyme catalyses L-glutamine + H2O = L-glutamate + NH4(+). Its pathway is purine metabolism; IMP biosynthesis via de novo pathway; 5-amino-1-(5-phospho-D-ribosyl)imidazole from N(2)-formyl-N(1)-(5-phospho-D-ribosyl)glycinamide: step 1/2. Functionally, part of the phosphoribosylformylglycinamidine synthase complex involved in the purines biosynthetic pathway. Catalyzes the ATP-dependent conversion of formylglycinamide ribonucleotide (FGAR) and glutamine to yield formylglycinamidine ribonucleotide (FGAM) and glutamate. The FGAM synthase complex is composed of three subunits. PurQ produces an ammonia molecule by converting glutamine to glutamate. PurL transfers the ammonia molecule to FGAR to form FGAM in an ATP-dependent manner. PurS interacts with PurQ and PurL and is thought to assist in the transfer of the ammonia molecule from PurQ to PurL. This chain is Phosphoribosylformylglycinamidine synthase subunit PurQ, found in Saccharolobus solfataricus (strain ATCC 35092 / DSM 1617 / JCM 11322 / P2) (Sulfolobus solfataricus).